The following is an 832-amino-acid chain: DEAD-box ATP-dependent RNA helicase 13 (832 aa).

The segment covering methionine 1–glutamine 12 has biased composition (pro residues). Disordered stretches follow at residues methionine 1–glutamate 59 and valine 91–valine 173. Residues arginine 29 to arginine 42 show a composition bias toward basic residues. Low complexity predominate over residues alanine 43–glycine 55. Over residues glutamine 105 to lysine 114 the composition is skewed to basic residues. The span at leucine 128 to glutamate 137 shows a compositional bias: acidic residues. The segment covering lysine 141 to valine 155 has biased composition (basic residues). The span at lysine 156–aspartate 167 shows a compositional bias: basic and acidic residues. Positions tyrosine 198 to lysine 226 match the Q motif motif. In terms of domain architecture, Helicase ATP-binding spans proline 230–lysine 447. Alanine 243–threonine 250 is a binding site for ATP. Positions aspartate 371–aspartate 374 match the DEAD box motif. Residues lysine 484–proline 645 form the Helicase C-terminal domain. The segment at arginine 800 to aspartate 832 is disordered. The span at lysine 814–aspartate 832 shows a compositional bias: basic and acidic residues.

It belongs to the DEAD box helicase family. DDX24/MAK5 subfamily.

The catalysed reaction is ATP + H2O = ADP + phosphate + H(+). In Oryza sativa subsp. japonica (Rice), this protein is DEAD-box ATP-dependent RNA helicase 13.